We begin with the raw amino-acid sequence, 373 residues long: Chaperone protein DnaJ (373 aa).

The region spanning 5–69 (DYYEVLGVNK…NKRANYDQFG (65 aa)) is the J domain. The CR-type zinc finger occupies 130 to 212 (GTKKEISIKK…CKGKGTENKT (83 aa)). The Zn(2+) site is built by C143, C146, C160, C163, C186, C189, C200, and C203. CXXCXGXG motif repeat units follow at residues 143–150 (CHTCNGDG), 160–167 (CSYCNGAG), 186–193 (CPKCEGSG), and 200–207 (CPTCKGKG).

This sequence belongs to the DnaJ family. As to quaternary structure, homodimer. Requires Zn(2+) as cofactor.

It localises to the cytoplasm. Participates actively in the response to hyperosmotic and heat shock by preventing the aggregation of stress-denatured proteins and by disaggregating proteins, also in an autonomous, DnaK-independent fashion. Unfolded proteins bind initially to DnaJ; upon interaction with the DnaJ-bound protein, DnaK hydrolyzes its bound ATP, resulting in the formation of a stable complex. GrpE releases ADP from DnaK; ATP binding to DnaK triggers the release of the substrate protein, thus completing the reaction cycle. Several rounds of ATP-dependent interactions between DnaJ, DnaK and GrpE are required for fully efficient folding. Also involved, together with DnaK and GrpE, in the DNA replication of plasmids through activation of initiation proteins. This Staphylococcus epidermidis (strain ATCC 12228 / FDA PCI 1200) protein is Chaperone protein DnaJ.